We begin with the raw amino-acid sequence, 613 residues long: Myrcene synthase, chloroplastic (613 aa).

Residues 1 to 46 (MQCMAVHQFAPLLSLLNCSRISSDFGRLFTPKTSTKSRSSTCHPIQ) constitute a chloroplast transit peptide. (2E)-geranyl diphosphate contacts are provided by R324, D361, and D365. Positions 361 and 365 each coordinate Mg(2+). Residues 361–365 (DDIYD) carry the DDXXD motif motif. A helical transmembrane segment spans residues 455–475 (IEMAWLSIGGPVILVHAYFCF). (2E)-geranyl diphosphate contacts are provided by R503 and D506. Mg(2+) is bound by residues D506, T510, and E514.

It belongs to the terpene synthase family. Tpsb subfamily. Mg(2+) serves as cofactor. It depends on Mn(2+) as a cofactor. As to expression, expressed in trichomes.

The protein localises to the plastid. Its subcellular location is the chloroplast membrane. The catalysed reaction is (2E)-geranyl diphosphate = beta-myrcene + diphosphate. It participates in secondary metabolite biosynthesis; terpenoid biosynthesis. Functionally, monoterpene synthase that catalyzes the formation of myrcene. Can use geranyl diphosphate as substrate, but not farnesyl diphosphate or geranylgeranyl diphosphate. This Humulus lupulus (European hop) protein is Myrcene synthase, chloroplastic.